The chain runs to 130 residues: Small ribosomal subunit protein uS9 (130 aa).

Belongs to the universal ribosomal protein uS9 family.

In Pseudoalteromonas atlantica (strain T6c / ATCC BAA-1087), this protein is Small ribosomal subunit protein uS9.